Consider the following 212-residue polypeptide: Molybdenum cofactor guanylyltransferase (212 aa).

GTP is bound by residues L14–G16, K27, N55, D73, and D108. A Mg(2+)-binding site is contributed by D108.

Belongs to the MobA family. In terms of assembly, monomer. Mg(2+) is required as a cofactor.

The protein resides in the cytoplasm. It catalyses the reaction Mo-molybdopterin + GTP + H(+) = Mo-molybdopterin guanine dinucleotide + diphosphate. Functionally, transfers a GMP moiety from GTP to Mo-molybdopterin (Mo-MPT) cofactor (Moco or molybdenum cofactor) to form Mo-molybdopterin guanine dinucleotide (Mo-MGD) cofactor. This Bradyrhizobium sp. (strain ORS 278) protein is Molybdenum cofactor guanylyltransferase.